The primary structure comprises 365 residues: tRNA/tmRNA (uracil-C(5))-methyltransferase (365 aa).

Residues Gln-189, Tyr-217, Asn-222, Glu-238, and Asp-298 each contribute to the S-adenosyl-L-methionine site. Cys-323 serves as the catalytic Nucleophile. Residue Glu-357 is the Proton acceptor of the active site.

Belongs to the class I-like SAM-binding methyltransferase superfamily. RNA M5U methyltransferase family. TrmA subfamily.

The enzyme catalyses uridine(54) in tRNA + S-adenosyl-L-methionine = 5-methyluridine(54) in tRNA + S-adenosyl-L-homocysteine + H(+). It catalyses the reaction uridine(341) in tmRNA + S-adenosyl-L-methionine = 5-methyluridine(341) in tmRNA + S-adenosyl-L-homocysteine + H(+). Functionally, dual-specificity methyltransferase that catalyzes the formation of 5-methyluridine at position 54 (m5U54) in all tRNAs, and that of position 341 (m5U341) in tmRNA (transfer-mRNA). This chain is tRNA/tmRNA (uracil-C(5))-methyltransferase, found in Shewanella loihica (strain ATCC BAA-1088 / PV-4).